A 506-amino-acid polypeptide reads, in one-letter code: Glutamyl-tRNA(Gln) amidotransferase subunit A, mitochondrial (506 aa).

Residues Lys-62 and Ser-141 each act as charge relay system in the active site. Ser-165 serves as the catalytic Acyl-ester intermediate.

This sequence belongs to the amidase family. GatA subfamily. Subunit of the heterotrimeric GatCAB amidotransferase (AdT) complex, composed of A, B and C subunits.

It is found in the mitochondrion. The catalysed reaction is L-glutamyl-tRNA(Gln) + L-glutamine + ATP + H2O = L-glutaminyl-tRNA(Gln) + L-glutamate + ADP + phosphate + H(+). In terms of biological role, allows the formation of correctly charged Gln-tRNA(Gln) through the transamidation of misacylated Glu-tRNA(Gln) in the mitochondria. The reaction takes place in the presence of glutamine and ATP through an activated gamma-phospho-Glu-tRNA(Gln). The sequence is that of Glutamyl-tRNA(Gln) amidotransferase subunit A, mitochondrial from Emericella nidulans (strain FGSC A4 / ATCC 38163 / CBS 112.46 / NRRL 194 / M139) (Aspergillus nidulans).